Here is a 121-residue protein sequence, read N- to C-terminus: Large ribosomal subunit protein bL12 (121 aa).

This sequence belongs to the bacterial ribosomal protein bL12 family. Homodimer. Part of the ribosomal stalk of the 50S ribosomal subunit. Forms a multimeric L10(L12)X complex, where L10 forms an elongated spine to which 2 to 4 L12 dimers bind in a sequential fashion. Binds GTP-bound translation factors.

In terms of biological role, forms part of the ribosomal stalk which helps the ribosome interact with GTP-bound translation factors. Is thus essential for accurate translation. This Proteus mirabilis (strain HI4320) protein is Large ribosomal subunit protein bL12.